The sequence spans 534 residues: CTP synthase (534 aa).

The amidoligase domain stretch occupies residues 1–267; sequence MTKYIFVTGG…DQIVCDHLKL (267 aa). A CTP-binding site is contributed by Ser13. Position 13 (Ser13) interacts with UTP. 14–19 is an ATP binding site; that stretch reads SIGKGI. Tyr54 lines the L-glutamine pocket. Asp71 provides a ligand contact to ATP. 2 residues coordinate Mg(2+): Asp71 and Glu141. CTP-binding positions include 148 to 150, 188 to 193, and Lys224; these read DIE and KTKPTQ. Residues 188-193 and Lys224 each bind UTP; that span reads KTKPTQ. Positions 292-534 constitute a Glutamine amidotransferase type-1 domain; the sequence is KIALVGKYVE…FVTAAVENMK (243 aa). Gly354 lines the L-glutamine pocket. Cys381 (nucleophile; for glutamine hydrolysis) is an active-site residue. Residues 382 to 385, Glu405, and Arg463 contribute to the L-glutamine site; that span reads LGMQ. Residues His508 and Glu510 contribute to the active site.

This sequence belongs to the CTP synthase family. As to quaternary structure, homotetramer.

It catalyses the reaction UTP + L-glutamine + ATP + H2O = CTP + L-glutamate + ADP + phosphate + 2 H(+). The enzyme catalyses L-glutamine + H2O = L-glutamate + NH4(+). It carries out the reaction UTP + NH4(+) + ATP = CTP + ADP + phosphate + 2 H(+). The protein operates within pyrimidine metabolism; CTP biosynthesis via de novo pathway; CTP from UDP: step 2/2. Allosterically activated by GTP, when glutamine is the substrate; GTP has no effect on the reaction when ammonia is the substrate. The allosteric effector GTP functions by stabilizing the protein conformation that binds the tetrahedral intermediate(s) formed during glutamine hydrolysis. Inhibited by the product CTP, via allosteric rather than competitive inhibition. Its function is as follows. Catalyzes the ATP-dependent amination of UTP to CTP with either L-glutamine or ammonia as the source of nitrogen. Regulates intracellular CTP levels through interactions with the four ribonucleotide triphosphates. In Streptococcus agalactiae serotype Ia (strain ATCC 27591 / A909 / CDC SS700), this protein is CTP synthase.